Consider the following 80-residue polypeptide: Small ribosomal subunit protein bS16c (80 aa).

It belongs to the bacterial ribosomal protein bS16 family.

It localises to the plastid. Its subcellular location is the chloroplast. The protein is Small ribosomal subunit protein bS16c of Lotus japonicus (Lotus corniculatus var. japonicus).